We begin with the raw amino-acid sequence, 349 residues long: Probable protease SohB (349 aa).

Topologically, residues 1–8 are periplasmic; that stretch reads MELLSEYG. The helical transmembrane segment at 9–29 threads the bilayer; the sequence is LFLAKIVTVVLAIAAIAAIIV. Over 30-349 the chain is Cytoplasmic; the sequence is NVAQRNKRQR…WWQRGQKPLM (320 aa). Serine 178 serves as the catalytic Nucleophile. Catalysis depends on lysine 230, which acts as the Proton donor/acceptor.

This sequence belongs to the peptidase S49 family.

Its subcellular location is the cell inner membrane. Multicopy suppressor of the HtrA (DegP) null phenotype. It is possibly a protease, not essential for bacterial viability. This is Probable protease SohB (sohB) from Escherichia coli (strain K12).